Here is a 231-residue protein sequence, read N- to C-terminus: Ribosome maturation factor RimM (231 aa).

The tract at residues 1 to 29 (MSERDSGSSGRAKAKRQPGAKAPFGPFVR) is disordered. In terms of domain architecture, PRC barrel spans 150-231 (TDEYYWVDLV…KIIVDWEADY (82 aa)).

Belongs to the RimM family. As to quaternary structure, binds ribosomal protein uS19.

It is found in the cytoplasm. Its function is as follows. An accessory protein needed during the final step in the assembly of 30S ribosomal subunit, possibly for assembly of the head region. Essential for efficient processing of 16S rRNA. May be needed both before and after RbfA during the maturation of 16S rRNA. It has affinity for free ribosomal 30S subunits but not for 70S ribosomes. The sequence is that of Ribosome maturation factor RimM from Paraburkholderia phymatum (strain DSM 17167 / CIP 108236 / LMG 21445 / STM815) (Burkholderia phymatum).